The following is a 441-amino-acid chain: Histidinol dehydrogenase (441 aa).

Residues Tyr136, Gln197, and Asn220 each contribute to the NAD(+) site. Residues Ser243, Gln265, and His268 each contribute to the substrate site. Zn(2+) is bound by residues Gln265 and His268. Active-site proton acceptor residues include Glu333 and His334. Substrate contacts are provided by His334, Asp367, Glu421, and His426. Position 367 (Asp367) interacts with Zn(2+). His426 provides a ligand contact to Zn(2+).

This sequence belongs to the histidinol dehydrogenase family. The cofactor is Zn(2+).

It catalyses the reaction L-histidinol + 2 NAD(+) + H2O = L-histidine + 2 NADH + 3 H(+). It functions in the pathway amino-acid biosynthesis; L-histidine biosynthesis; L-histidine from 5-phospho-alpha-D-ribose 1-diphosphate: step 9/9. Its function is as follows. Catalyzes the sequential NAD-dependent oxidations of L-histidinol to L-histidinaldehyde and then to L-histidine. This Pseudomonas putida (strain ATCC 47054 / DSM 6125 / CFBP 8728 / NCIMB 11950 / KT2440) protein is Histidinol dehydrogenase.